The following is a 275-amino-acid chain: MSQQLQQIIDNAWENRAELSPKAAPAEVREAVAHAIEQLDKGALRVAEKIDGNWTVHQWLKKAVLLSFRLEDNAPMPAGGYSQFYDKVPSKFANYTAEDFAAGGFRVVPPAIARRGSFIAKNVVLMPSYTNIGAYVDEGTMVDTWATVGSCAQIGKNVHLSGGVGIGGVLEPLQANPVIIEDNCFIGARSEVVEGVIVEENSVISMGVYLGQSTKIYDRETGEISYGRIPAGSVVVAGNLPSKDGSHSLYCAVIVKKVDAKTRAKVGLNELLRGD.

The protein belongs to the transferase hexapeptide repeat family.

Its subcellular location is the cytoplasm. The enzyme catalyses (S)-2,3,4,5-tetrahydrodipicolinate + succinyl-CoA + H2O = (S)-2-succinylamino-6-oxoheptanedioate + CoA. It participates in amino-acid biosynthesis; L-lysine biosynthesis via DAP pathway; LL-2,6-diaminopimelate from (S)-tetrahydrodipicolinate (succinylase route): step 1/3. In Burkholderia multivorans (strain ATCC 17616 / 249), this protein is 2,3,4,5-tetrahydropyridine-2,6-dicarboxylate N-succinyltransferase.